Here is a 130-residue protein sequence, read N- to C-terminus: Small ribosomal subunit protein uS11 (130 aa).

It belongs to the universal ribosomal protein uS11 family. Part of the 30S ribosomal subunit. Interacts with proteins S7 and S18. Binds to IF-3.

Functionally, located on the platform of the 30S subunit, it bridges several disparate RNA helices of the 16S rRNA. Forms part of the Shine-Dalgarno cleft in the 70S ribosome. The chain is Small ribosomal subunit protein uS11 from Tropheryma whipplei (strain TW08/27) (Whipple's bacillus).